Consider the following 151-residue polypeptide: Peptide methionine sulfoxide reductase MsrB (151 aa).

In terms of domain architecture, MsrB spans 5 to 127 (KEERLKQLTR…NSAALRFVPK (123 aa)). Cys-116 (nucleophile) is an active-site residue.

It belongs to the MsrB Met sulfoxide reductase family.

It carries out the reaction L-methionyl-[protein] + [thioredoxin]-disulfide + H2O = L-methionyl-(R)-S-oxide-[protein] + [thioredoxin]-dithiol. In Bacillus licheniformis (strain ATCC 14580 / DSM 13 / JCM 2505 / CCUG 7422 / NBRC 12200 / NCIMB 9375 / NCTC 10341 / NRRL NRS-1264 / Gibson 46), this protein is Peptide methionine sulfoxide reductase MsrB.